A 60-amino-acid polypeptide reads, in one-letter code: Ribosome biogenesis protein Nop10 (60 aa).

This sequence belongs to the NOP10 family.

Involved in ribosome biogenesis; more specifically in 18S rRNA pseudouridylation and in cleavage of pre-rRNA. The polypeptide is Ribosome biogenesis protein Nop10 (Haloquadratum walsbyi (strain DSM 16790 / HBSQ001)).